The following is a 151-amino-acid chain: MKPAARRNARHFAIQAIYSWQITKGNVAEIEQQFLSDDKFEEEEHQADAPILAAPHTDLNYFHDLLNGVVQNHQELDSKMRPYLSRPLQDLDQMELALLRLAMYEMTKREDVPYKVVINEAIELAKIFGAEDSHKFVNGVLDKAAPTLRKK.

The protein belongs to the NusB family.

In terms of biological role, involved in transcription antitermination. Required for transcription of ribosomal RNA (rRNA) genes. Binds specifically to the boxA antiterminator sequence of the ribosomal RNA (rrn) operons. The polypeptide is Transcription antitermination protein NusB (Photobacterium profundum (strain SS9)).